A 493-amino-acid polypeptide reads, in one-letter code: 3-octaprenyl-4-hydroxybenzoate carboxy-lyase (493 aa).

Asn172 contacts Mn(2+). Residues 175–177, 189–191, and 194–195 each bind prenylated FMN; these read IYR, RWL, and RG. Glu238 contacts Mn(2+). The Proton donor role is filled by Asp287.

The protein belongs to the UbiD family. In terms of assembly, homohexamer. Requires prenylated FMN as cofactor. Mn(2+) is required as a cofactor.

It localises to the cell membrane. The enzyme catalyses a 4-hydroxy-3-(all-trans-polyprenyl)benzoate + H(+) = a 2-(all-trans-polyprenyl)phenol + CO2. Its pathway is cofactor biosynthesis; ubiquinone biosynthesis. In terms of biological role, catalyzes the decarboxylation of 3-octaprenyl-4-hydroxy benzoate to 2-octaprenylphenol, an intermediate step in ubiquinone biosynthesis. The protein is 3-octaprenyl-4-hydroxybenzoate carboxy-lyase of Shewanella sp. (strain ANA-3).